Consider the following 404-residue polypeptide: Probable tRNA sulfurtransferase (404 aa).

The THUMP domain maps to Thr-60–Thr-165. Residues Met-183–Leu-184, His-208–Phe-209, Arg-265, Gly-287, and Gln-296 contribute to the ATP site.

It belongs to the ThiI family.

Its subcellular location is the cytoplasm. It carries out the reaction [ThiI sulfur-carrier protein]-S-sulfanyl-L-cysteine + a uridine in tRNA + 2 reduced [2Fe-2S]-[ferredoxin] + ATP + H(+) = [ThiI sulfur-carrier protein]-L-cysteine + a 4-thiouridine in tRNA + 2 oxidized [2Fe-2S]-[ferredoxin] + AMP + diphosphate. The catalysed reaction is [ThiS sulfur-carrier protein]-C-terminal Gly-Gly-AMP + S-sulfanyl-L-cysteinyl-[cysteine desulfurase] + AH2 = [ThiS sulfur-carrier protein]-C-terminal-Gly-aminoethanethioate + L-cysteinyl-[cysteine desulfurase] + A + AMP + 2 H(+). It functions in the pathway cofactor biosynthesis; thiamine diphosphate biosynthesis. Its function is as follows. Catalyzes the ATP-dependent transfer of a sulfur to tRNA to produce 4-thiouridine in position 8 of tRNAs, which functions as a near-UV photosensor. Also catalyzes the transfer of sulfur to the sulfur carrier protein ThiS, forming ThiS-thiocarboxylate. This is a step in the synthesis of thiazole, in the thiamine biosynthesis pathway. The sulfur is donated as persulfide by IscS. This is Probable tRNA sulfurtransferase from Streptococcus pneumoniae (strain ATCC 700669 / Spain 23F-1).